A 599-amino-acid chain; its full sequence is Pentatricopeptide repeat-containing protein At3g62540, mitochondrial (599 aa).

Residues 1–99 (MAAAPWLYLS…RGFSSGSSNV (99 aa)) constitute a mitochondrion transit peptide. PPR repeat units follow at residues 194–228 (ASRT…GLLT), 230–262 (ETFT…KFKI), 263–293 (GVET…LKER), 297–331 (NMMT…GLKP), 332–366 (DIVA…GPCP), 367–401 (NVRS…GLQP), 402–436 (DAAV…GHPP), 437–471 (DGKT…EIEP), 472–506 (SIHT…GICP), and 507–541 (DDNS…GMKT).

The protein belongs to the PPR family. P subfamily.

It localises to the mitochondrion. This chain is Pentatricopeptide repeat-containing protein At3g62540, mitochondrial, found in Arabidopsis thaliana (Mouse-ear cress).